Here is a 122-residue protein sequence, read N- to C-terminus: Large ribosomal subunit protein uL14c (122 aa).

The protein belongs to the universal ribosomal protein uL14 family. As to quaternary structure, part of the 50S ribosomal subunit.

The protein localises to the plastid. Its subcellular location is the chloroplast. Functionally, binds to 23S rRNA. The chain is Large ribosomal subunit protein uL14c from Citrus sinensis (Sweet orange).